A 64-amino-acid chain; its full sequence is Temporin-ALf (64 aa).

Positions 1 to 22 (MFTLKKSLLLLFFLGTINLSLC) are cleaved as a signal peptide. The propeptide occupies 23-46 (EQERNAEEERRDEPDERNAEVEKR). Leucine 62 is modified (leucine amide).

As to expression, expressed by the skin glands.

It is found in the secreted. Its function is as follows. Antimicrobial peptide with activity against Gram-positive and Gram-negative bacteria and against fungi. Has been tested against S.aureus (MIC=2.5 ug/mL), B.pumilus (MIC=5.0 ug/mL), B.cereus (MIC=30.0 ug/mL), E.coli (MIC=2.5 ug/mL), B.dysenteriae (MIC=5.0 ug/mL), A.cacoaceticus (MIC=30.0 ug/mL), P.aeruginosa (MIC=5.0 ug/mL) and C.albicans (MIC=2.5 ug/mL). Also shows a weak hemolytic activity. This Amolops loloensis (Lolokou Sucker Frog) protein is Temporin-ALf.